A 734-amino-acid chain; its full sequence is Photosystem I P700 chlorophyll a apoprotein A2 (734 aa).

8 consecutive transmembrane segments (helical) span residues isoleucine 46–alanine 69, leucine 135–glutamine 158, leucine 175–isoleucine 199, isoleucine 273–tyrosine 291, leucine 330–tyrosine 353, alanine 369–isoleucine 395, alanine 417–histidine 439, and phenylalanine 517–valine 535. The [4Fe-4S] cluster site is built by cysteine 559 and cysteine 568. Helical transmembrane passes span alanine 575–tryptophan 596 and leucine 643–isoleucine 665. The chlorophyll a site is built by histidine 654, methionine 662, and tyrosine 670. A phylloquinone-binding site is contributed by tryptophan 671. The chain crosses the membrane as a helical span at residues leucine 707–alanine 727.

The protein belongs to the PsaA/PsaB family. In terms of assembly, the PsaA/B heterodimer binds the P700 chlorophyll special pair and subsequent electron acceptors. PSI consists of a core antenna complex that captures photons, and an electron transfer chain that converts photonic excitation into a charge separation. The eukaryotic PSI reaction center is composed of at least 11 subunits. P700 is a chlorophyll a/chlorophyll a' dimer, A0 is one or more chlorophyll a, A1 is one or both phylloquinones and FX is a shared 4Fe-4S iron-sulfur center. serves as cofactor.

The protein resides in the plastid. The protein localises to the chloroplast thylakoid membrane. It carries out the reaction reduced [plastocyanin] + hnu + oxidized [2Fe-2S]-[ferredoxin] = oxidized [plastocyanin] + reduced [2Fe-2S]-[ferredoxin]. PsaA and PsaB bind P700, the primary electron donor of photosystem I (PSI), as well as the electron acceptors A0, A1 and FX. PSI is a plastocyanin-ferredoxin oxidoreductase, converting photonic excitation into a charge separation, which transfers an electron from the donor P700 chlorophyll pair to the spectroscopically characterized acceptors A0, A1, FX, FA and FB in turn. Oxidized P700 is reduced on the lumenal side of the thylakoid membrane by plastocyanin. This chain is Photosystem I P700 chlorophyll a apoprotein A2, found in Nicotiana tomentosiformis (Tobacco).